We begin with the raw amino-acid sequence, 389 residues long: Large envelope protein (389 aa).

An N-acetylmethionine modification is found at methionine 1. A lipid anchor (N-myristoyl glycine; by host) is attached at glycine 2. Residues 2-108 are pre-S1; the sequence is GQNLSTSNPL…PPLRTTHPQA (107 aa). Residues 2-163 are pre-S; the sequence is GQNLSTSNPL…SSRIGDPALN (162 aa). Over 2 to 170 the chain is Virion surface; in external conformation; the sequence is GQNLSTSNPL…ALNMENITSG (169 aa). Residues 2 to 242 lie on the Intravirion; in internal conformation side of the membrane; that stretch reads GQNLSTSNPL…VGYRWMCLRR (241 aa). Disordered stretches follow at residues 76 to 102 and 133 to 154; these read TLPANPPPASTNRQSGRQPTPLSPPLR and GGSSSGTVNPVPTTASPTLSTS. The segment covering 85–95 has biased composition (polar residues); sequence STNRQSGRQPT. The pre-S2 stretch occupies residues 109 to 163; it reads MQWNSTTFHQTLQDPRVRGLYLPAGGSSSGTVNPVPTTASPTLSTSSRIGDPALN. Residues 142 to 154 show a composition bias toward low complexity; that stretch reads PVPTTASPTLSTS. A helical transmembrane segment spans residues 171–191; sequence FLGPLLVLQAGFFLLTRILTI. Over 192–242 the chain is Intravirion; in external conformation; sequence PQSLDSWWTSLSFLGGTTVCLGQNSQSPTSNHSPTSCPPTCVGYRWMCLRR. Residues 243–263 form a helical membrane-spanning segment; the sequence is FIIFLFILLLCLIFLLVLLDY. Residues 264 to 337 lie on the Virion surface side of the membrane; the sequence is QGMLPVCPLI…WASARFSWLS (74 aa). A glycan (N-linked (GlcNAc...) asparagine; by host) is linked at asparagine 309. A helical membrane pass occupies residues 338–358; that stretch reads LLVPFVQWFVGLSPTVWLSVI. Over 359–364 the chain is Intravirion; it reads WMMWYW. The helical transmembrane segment at 365-387 threads the bilayer; that stretch reads GPSLYNTLSPFLPLLPIFFYLWV. Topologically, residues 388–389 are virion surface; sequence YI.

This sequence belongs to the orthohepadnavirus major surface antigen family. In its internal form (Li-HBsAg), interacts with the capsid protein and with the isoform S. Interacts with host chaperone CANX. As to quaternary structure, associates with host chaperone CANX through its pre-S2 N glycan; this association may be essential for isoform M proper secretion. In terms of assembly, interacts with isoform L. Interacts with the antigens of satellite virus HDV (HDVAgs); this interaction is required for encapsidation of HDV genomic RNA. In terms of processing, isoform M is N-terminally acetylated by host at a ratio of 90%, and N-glycosylated by host at the pre-S2 region. Post-translationally, myristoylated.

Its subcellular location is the virion membrane. In terms of biological role, the large envelope protein exists in two topological conformations, one which is termed 'external' or Le-HBsAg and the other 'internal' or Li-HBsAg. In its external conformation the protein attaches the virus to cell receptors and thereby initiating infection. This interaction determines the species specificity and liver tropism. This attachment induces virion internalization predominantly through caveolin-mediated endocytosis. The large envelope protein also assures fusion between virion membrane and endosomal membrane. In its internal conformation the protein plays a role in virion morphogenesis and mediates the contact with the nucleocapsid like a matrix protein. The middle envelope protein plays an important role in the budding of the virion. It is involved in the induction of budding in a nucleocapsid independent way. In this process the majority of envelope proteins bud to form subviral lipoprotein particles of 22 nm of diameter that do not contain a nucleocapsid. This is Large envelope protein from Homo sapiens (Human).